Reading from the N-terminus, the 370-residue chain is Lysophosphatidic acid receptor 4 (370 aa).

At 1–43 the chain is on the extracellular side; that stretch reads MGDRRFIDFQFQDLNSSLRPRLGNATANNTCIVDDSFKYNLNG. N-linked (GlcNAc...) asparagine glycosylation is found at asparagine 15, asparagine 24, and asparagine 28. The chain crosses the membrane as a helical span at residues 44 to 64; it reads AVYSVVFILGLITNSASLFVF. Residues 65 to 73 lie on the Cytoplasmic side of the membrane; that stretch reads CFRMKMRSE. Residues 74-94 traverse the membrane as a helical segment; sequence TAIFITNLALSDLLFVCTLPF. Topologically, residues 95 to 112 are extracellular; it reads KIFYNFNRHWPFGDTLCK. Cysteine 111 and cysteine 188 are disulfide-bonded. Residues 113 to 133 traverse the membrane as a helical segment; that stretch reads ISGTAFLTNIYGSMLFLTCIS. The Cytoplasmic portion of the chain corresponds to 134–155; it reads VDRFLAIVYPFRSRTIRTRRNS. Residues 156–176 form a helical membrane-spanning segment; that stretch reads AIVCAGVWILVLSGGISASLF. At 177-203 the chain is on the extracellular side; that stretch reads STTNVNNATTTCFEGFSKRVWKTYLSK. A glycan (N-linked (GlcNAc...) asparagine) is linked at asparagine 183. A helical transmembrane segment spans residues 204–224; sequence ITIFIEVVGFIIPLILNVSCS. The Cytoplasmic portion of the chain corresponds to 225-254; sequence SVVLRTLRKPATLSQIGTNKKKVLKMITVH. A helical transmembrane segment spans residues 255 to 275; that stretch reads MAVFVVCFVPYNSVLFLYALV. Topologically, residues 276–294 are extracellular; sequence RSQAITNCLLERFAKIMYP. Residues 295–315 traverse the membrane as a helical segment; it reads ITLCLATLNCCFDPFIYYFTL. Topologically, residues 316 to 370 are cytoplasmic; that stretch reads ESFQKSFYINTHIRMESLFKTETPLTPKPSLPAIQEEVSDQTTNNGGELMLESTF.

It belongs to the G-protein coupled receptor 1 family.

It localises to the cell membrane. Functionally, receptor for lysophosphatidic acid (LPA), a mediator of diverse cellular activities. Transduces a signal by increasing the intracellular calcium ions and by stimulating adenylyl cyclase activity. The rank order of potency for agonists of this receptor is 1-oleoyl- &gt; 1-stearoyl- &gt; 1-palmitoyl- &gt; 1-myristoyl- &gt; 1-alkyl- &gt; 1-alkenyl-LPA. In Mus musculus (Mouse), this protein is Lysophosphatidic acid receptor 4 (Lpar4).